A 493-amino-acid chain; its full sequence is NADH-quinone oxidoreductase subunit M (493 aa).

The next 14 helical transmembrane spans lie at 5–25 (PIIS…LLFI), 37–57 (VMYV…YILI), 89–109 (ISIL…IGSL), 115–135 (YIKE…GAFT), 139–159 (LLLF…IIGV), 172–192 (FFLY…YIYS), 216–236 (ILWW…PFHT), 251–271 (VILA…VLLP), 280–300 (FAIY…LVAL), 308–328 (MIAY…FSFT), 334–354 (GAIF…LIVG), 375–395 (MPVL…LPGT), 411–431 (VNVV…VYML), and 458–478 (IISI…PSSI).

The protein belongs to the complex I subunit 4 family.

It localises to the cell membrane. It catalyses the reaction a quinone + NADH + 5 H(+)(in) = a quinol + NAD(+) + 4 H(+)(out). Its function is as follows. NDH-1 shuttles electrons from NADH, via FMN and iron-sulfur (Fe-S) centers, to quinones in the respiratory chain. Couples the redox reaction to proton translocation (for every two electrons transferred, four hydrogen ions are translocated across the cytoplasmic membrane), and thus conserves the redox energy in a proton gradient. The sequence is that of NADH-quinone oxidoreductase subunit M (nuoM) from Rickettsia conorii (strain ATCC VR-613 / Malish 7).